Here is a 134-residue protein sequence, read N- to C-terminus: Small ribosomal subunit protein uS17c (134 aa).

The N-terminal 37 residues, 1–37, are a transit peptide targeting the chloroplast; sequence HHFFTGNGIGLNRFSNPISSPQTQTQTRSLPFPAIKA. The disordered stretch occupies residues 106-134; the sequence is FLAVPAPSRKSKKAGSSGELGIPLQSQQE.

The protein belongs to the universal ribosomal protein uS17 family. Part of the 30S ribosomal subunit.

The protein resides in the plastid. It localises to the chloroplast. Functionally, one of the primary rRNA binding proteins, it binds specifically to the 5'-end of 16S ribosomal RNA. This is Small ribosomal subunit protein uS17c (RPS17) from Pisum sativum (Garden pea).